Consider the following 416-residue polypeptide: Protein sine oculis (416 aa).

Disordered regions lie at residues 32–91 and 262–329; these read TGLS…SGGG and VSNW…NNGL. Residues 42-57 show a composition bias toward low complexity; that stretch reads NNNNNNSSTSNNNNST. A compositionally biased stretch (gly residues) spans 79 to 91; that stretch reads NGGGGGGVVSGGG. Residues 218-277 constitute a DNA-binding region (homeobox); it reads GEETSYCFKEKSRSVLRDWYSHNPYPSPREKRDLAEATGLTTTQVSNWFKNRRQRDRAAE. Over residues 273 to 290 the composition is skewed to basic and acidic residues; that stretch reads DRAAEHKDGSTDKQHLDS. Over residues 291–329 the composition is skewed to low complexity; the sequence is SSDSEMEGSMLPSQSAQHQQQQQQQQHSPGNSSGNNNGL.

It belongs to the SIX/Sine oculis homeobox family. In terms of tissue distribution, in developing embryos, expressed in the eye disk epithelium, bolwig's organ and the optic lobe primordium at areas of invagination. In adults, present in photoreceptor cells in the apical regions of the retina, and in optic lobes.

The protein resides in the nucleus. Functionally, required for visual system development. May transcriptionally regulate genes necessary for optic lobe invagination and Bolwig's nerve formation. In Drosophila melanogaster (Fruit fly), this protein is Protein sine oculis (so).